The chain runs to 353 residues: UDP-N-acetylglucosamine--N-acetylmuramyl-(pentapeptide) pyrophosphoryl-undecaprenol N-acetylglucosamine transferase (353 aa).

UDP-N-acetyl-alpha-D-glucosamine contacts are provided by residues 15 to 17 (TGG), Asn125, Arg165, Ser186, and Gln286.

The protein belongs to the glycosyltransferase 28 family. MurG subfamily.

The protein resides in the cell inner membrane. It catalyses the reaction di-trans,octa-cis-undecaprenyl diphospho-N-acetyl-alpha-D-muramoyl-L-alanyl-D-glutamyl-meso-2,6-diaminopimeloyl-D-alanyl-D-alanine + UDP-N-acetyl-alpha-D-glucosamine = di-trans,octa-cis-undecaprenyl diphospho-[N-acetyl-alpha-D-glucosaminyl-(1-&gt;4)]-N-acetyl-alpha-D-muramoyl-L-alanyl-D-glutamyl-meso-2,6-diaminopimeloyl-D-alanyl-D-alanine + UDP + H(+). It participates in cell wall biogenesis; peptidoglycan biosynthesis. Functionally, cell wall formation. Catalyzes the transfer of a GlcNAc subunit on undecaprenyl-pyrophosphoryl-MurNAc-pentapeptide (lipid intermediate I) to form undecaprenyl-pyrophosphoryl-MurNAc-(pentapeptide)GlcNAc (lipid intermediate II). The sequence is that of UDP-N-acetylglucosamine--N-acetylmuramyl-(pentapeptide) pyrophosphoryl-undecaprenol N-acetylglucosamine transferase from Chlamydia muridarum (strain MoPn / Nigg).